The primary structure comprises 810 residues: Phenylalanine--tRNA ligase beta subunit (810 aa).

The tRNA-binding domain occupies 39–151 (RTWAAGVVVG…AGLQAGQPVG (113 aa)). The B5 domain maps to 408 to 494 (EPEHSITLRL…RLYGYDNFGE (87 aa)). 4 residues coordinate Mg(2+): Asp472, Asp478, Glu481, and Glu482. In terms of domain architecture, FDX-ACB spans 716–809 (SSFPASDRDL…LVERFRVTLR (94 aa)).

This sequence belongs to the phenylalanyl-tRNA synthetase beta subunit family. Type 1 subfamily. In terms of assembly, tetramer of two alpha and two beta subunits. The cofactor is Mg(2+).

The protein localises to the cytoplasm. It carries out the reaction tRNA(Phe) + L-phenylalanine + ATP = L-phenylalanyl-tRNA(Phe) + AMP + diphosphate + H(+). This Synechococcus elongatus (strain ATCC 33912 / PCC 7942 / FACHB-805) (Anacystis nidulans R2) protein is Phenylalanine--tRNA ligase beta subunit (pheT).